A 125-amino-acid polypeptide reads, in one-letter code: MKTVILFGFLLALLGYLEAEHAQSDPEFTAKARQMLAVFGNSEVDRYTKSRNLPALIEFYEKYSSRLPLTVQDRTYANNVIRRYRAHNNQQVDGVPAQGGVGVVFALLLPFAVSIVEGIAKAIRE.

Positions 1–19 (MKTVILFGFLLALLGYLEA) are cleaved as a signal peptide.

This sequence belongs to the Turandot family.

The protein localises to the secreted. Its function is as follows. A humoral factor that may play a role in stress tolerance. The protein is Protein Turandot F of Drosophila melanogaster (Fruit fly).